Reading from the N-terminus, the 266-residue chain is Ribonuclease HII (266 aa).

Residues 19 to 38 are disordered; sequence HPGMIRDKEKPAPTKPGKGV. The 189-residue stretch at 58 to 246 folds into the RNase H type-2 domain; it reads WPVAGCDEAG…VVAARQKHQP (189 aa). A divalent metal cation is bound by residues Asp64, Glu65, and Asp155.

It belongs to the RNase HII family. Mn(2+) is required as a cofactor. The cofactor is Mg(2+).

It is found in the cytoplasm. The enzyme catalyses Endonucleolytic cleavage to 5'-phosphomonoester.. Functionally, endonuclease that specifically degrades the RNA of RNA-DNA hybrids. The sequence is that of Ribonuclease HII from Rhodopseudomonas palustris (strain BisB18).